A 175-amino-acid chain; its full sequence is Large ribosomal subunit protein uL10 (175 aa).

This sequence belongs to the universal ribosomal protein uL10 family. Part of the ribosomal stalk of the 50S ribosomal subunit. The N-terminus interacts with L11 and the large rRNA to form the base of the stalk. The C-terminus forms an elongated spine to which L12 dimers bind in a sequential fashion forming a multimeric L10(L12)X complex.

Forms part of the ribosomal stalk, playing a central role in the interaction of the ribosome with GTP-bound translation factors. This Methylobacterium nodulans (strain LMG 21967 / CNCM I-2342 / ORS 2060) protein is Large ribosomal subunit protein uL10.